Consider the following 60-residue polypeptide: Ribosome-inactivating protein dianthin-32 (60 aa).

This sequence belongs to the ribosome-inactivating protein family. Type 1 RIP subfamily.

The enzyme catalyses Endohydrolysis of the N-glycosidic bond at one specific adenosine on the 28S rRNA.. Single-chain ribosome-inactivating protein. The polypeptide is Ribosome-inactivating protein dianthin-32 (Dianthus caryophyllus (Carnation)).